The following is a 440-amino-acid chain: Ribulose bisphosphate carboxylase large chain (440 aa).

Lysine 4 bears the N6,N6,N6-trimethyllysine mark. Residues asparagine 113 and threonine 163 each coordinate substrate. The Proton acceptor role is filled by lysine 165. Residue lysine 167 coordinates substrate. Mg(2+) contacts are provided by lysine 191, aspartate 193, and glutamate 194. Lysine 191 is subject to N6-carboxylysine. Histidine 284 acts as the Proton acceptor in catalysis. Substrate contacts are provided by arginine 285, histidine 317, and serine 369.

Belongs to the RuBisCO large chain family. Type I subfamily. In terms of assembly, heterohexadecamer of 8 large chains and 8 small chains; disulfide-linked. The disulfide link is formed within the large subunit homodimers. It depends on Mg(2+) as a cofactor. In terms of processing, the disulfide bond which can form in the large chain dimeric partners within the hexadecamer appears to be associated with oxidative stress and protein turnover.

The protein resides in the plastid. The protein localises to the chloroplast. It carries out the reaction 2 (2R)-3-phosphoglycerate + 2 H(+) = D-ribulose 1,5-bisphosphate + CO2 + H2O. The enzyme catalyses D-ribulose 1,5-bisphosphate + O2 = 2-phosphoglycolate + (2R)-3-phosphoglycerate + 2 H(+). Functionally, ruBisCO catalyzes two reactions: the carboxylation of D-ribulose 1,5-bisphosphate, the primary event in carbon dioxide fixation, as well as the oxidative fragmentation of the pentose substrate in the photorespiration process. Both reactions occur simultaneously and in competition at the same active site. The protein is Ribulose bisphosphate carboxylase large chain of Dicksonia antarctica (Australian tree fern).